Here is a 417-residue protein sequence, read N- to C-terminus: MKAISVLGSTGSIGTQTLQIVDDFPDQFRVVALTAGRNLALLVEQIQRHQPELVALADEALLPELKQRLEALDPSDRPAQCPEMVGGPDGLEVAASWGSAELVVTGIVGCAGLLPTLAAVRAGKDLALANKETLIAAGPVVLPELKKSGSRLLPADSEHSAIFQCLQGTPWADTARLSTGVPTPGLRRIQLTASGGAFRDWNAADLEKATVADATSHPNWSMGRKITVDSASLMNKGLEVIEAHYLFGLDYDHIEIVIHPQSIIHSMVEMADSSVLAQLGWPDMKLPILYCLSWPSRLETPWRRLDLTEVGQLSFRAPDPNKYPCMELAYAAGRAGGTMPAVMNAANEEAVAQFLEERIHFLDIPEVIEAACERHKPDLMAHPQLDDVLEVDQWARTAVREQVSRGTTRIPGPAVAA.

Residues threonine 10, glycine 11, serine 12, isoleucine 13, glycine 36, arginine 37, asparagine 38, and asparagine 130 each coordinate NADPH. A 1-deoxy-D-xylulose 5-phosphate-binding site is contributed by lysine 131. Glutamate 132 contacts NADPH. Aspartate 156 contributes to the Mn(2+) binding site. Serine 157, glutamate 158, serine 194, and histidine 217 together coordinate 1-deoxy-D-xylulose 5-phosphate. Glutamate 158 provides a ligand contact to Mn(2+). Glycine 223 is an NADPH binding site. Residues serine 230, asparagine 235, lysine 236, and glutamate 239 each contribute to the 1-deoxy-D-xylulose 5-phosphate site. Residue glutamate 239 participates in Mn(2+) binding.

The protein belongs to the DXR family. Requires Mg(2+) as cofactor. It depends on Mn(2+) as a cofactor.

It carries out the reaction 2-C-methyl-D-erythritol 4-phosphate + NADP(+) = 1-deoxy-D-xylulose 5-phosphate + NADPH + H(+). Its pathway is isoprenoid biosynthesis; isopentenyl diphosphate biosynthesis via DXP pathway; isopentenyl diphosphate from 1-deoxy-D-xylulose 5-phosphate: step 1/6. Its function is as follows. Catalyzes the NADPH-dependent rearrangement and reduction of 1-deoxy-D-xylulose-5-phosphate (DXP) to 2-C-methyl-D-erythritol 4-phosphate (MEP). The polypeptide is 1-deoxy-D-xylulose 5-phosphate reductoisomerase (Synechococcus sp. (strain CC9902)).